Here is a 339-residue protein sequence, read N- to C-terminus: UDP-N-acetylenolpyruvoylglucosamine reductase (339 aa).

An FAD-binding PCMH-type domain is found at 18–189 (GIDVKARYFS…LRVRFALTRT (172 aa)). Residue R166 is part of the active site. Catalysis depends on S239, which acts as the Proton donor. E335 is a catalytic residue.

Belongs to the MurB family. Requires FAD as cofactor.

The protein localises to the cytoplasm. It carries out the reaction UDP-N-acetyl-alpha-D-muramate + NADP(+) = UDP-N-acetyl-3-O-(1-carboxyvinyl)-alpha-D-glucosamine + NADPH + H(+). Its pathway is cell wall biogenesis; peptidoglycan biosynthesis. Cell wall formation. In Pseudomonas putida (strain ATCC 47054 / DSM 6125 / CFBP 8728 / NCIMB 11950 / KT2440), this protein is UDP-N-acetylenolpyruvoylglucosamine reductase.